The following is a 267-amino-acid chain: Interleukin-15 receptor subunit alpha (267 aa).

Positions 1–30 are cleaved as a signal peptide; sequence MAPRRARGCRTLGLPALLLLLLLRPPATRG. In terms of domain architecture, Sushi spans 31–95; that stretch reads ITCPPPMSVE…WTTPSLKCIR (65 aa). Over 31 to 205 the chain is Extracellular; it reads ITCPPPMSVE…VYPQGHSDTT (175 aa). Disulfide bonds link Cys33–Cys75 and Cys59–Cys93. Residues 102–178 are disordered; the sequence is QRPAPPSTVT…ESSHGTPSQT (77 aa). The span at 108 to 124 shows a compositional bias: polar residues; it reads STVTTAGVTPQPESLSP. Over residues 129–145 the composition is skewed to low complexity; that stretch reads PAASSPSSNNTAATTAA. N-linked (GlcNAc...) asparagine glycosylation occurs at Asn137. Positions 152–165 are enriched in polar residues; sequence LMPSKSPSTGTTEI. Residues 206–228 traverse the membrane as a helical segment; that stretch reads VAISTSTVLLCGLSAVSLLACYL. Topologically, residues 229–267 are cytoplasmic; that stretch reads KSRQTPPLASVEMEAMEALPVTWGTSSRDEDLENCSHHL.

As to quaternary structure, the interleukin-15 receptor IL15R is a heterotrimer of IL15RA, IL2RB and IL2RG. IL15RA also self-associates. Interacts with SYK. In terms of processing, N-glycosylated and O-glycosylated. Post-translationally, a soluble form (sIL-15RA) arises from proteolytic shedding of the membrane-anchored receptor. It also binds IL-15 and thus interferes with IL-15 binding to the membrane receptor. Expressed in neutrophils (at protein level). Expressed in fetal brain with higher expression in the hippocampus and cerebellum than in cortex and thalamus. Higher levels of soluble sIL-15RA form in comparison with membrane-bound forms is present in all brain structures. Isoforms 1, 3, 4, 5, 6, 7, 8 and 9: Widely expressed.

Its subcellular location is the membrane. The protein localises to the nucleus membrane. It is found in the cell surface. The protein resides in the endoplasmic reticulum membrane. It localises to the golgi apparatus membrane. Its subcellular location is the cytoplasmic vesicle membrane. The protein localises to the secreted. It is found in the extracellular space. Its function is as follows. High-affinity receptor for interleukin-15. Can signal both in cis and trans where IL15R from one subset of cells presents IL15 to neighboring IL2RG-expressing cells. In neutrophils, binds and activates kinase SYK in response to IL15 stimulation. In neutrophils, required for IL15-induced phagocytosis in a SYK-dependent manner. Expression of different isoforms may alter or interfere with signal transduction. Functionally, does not bind IL15. In Homo sapiens (Human), this protein is Interleukin-15 receptor subunit alpha (IL15RA).